Here is a 197-residue protein sequence, read N- to C-terminus: Holliday junction branch migration complex subunit RuvA (197 aa).

The tract at residues 1–63 (MYAYLKGIIT…EDAHLLYGFR (63 aa)) is domain I. A domain II region spans residues 64 to 142 (SEDEKKLFLS…VAGDDLPAKI (79 aa)). A flexible linker region spans residues 143-147 (AVQAS). Residues 148–197 (AENQELEEAMEAMLALGYKATELKKIKKFFEGTTDTAENYIKSALKMLVK) are domain III.

The protein belongs to the RuvA family. In terms of assembly, homotetramer. Forms an RuvA(8)-RuvB(12)-Holliday junction (HJ) complex. HJ DNA is sandwiched between 2 RuvA tetramers; dsDNA enters through RuvA and exits via RuvB. An RuvB hexamer assembles on each DNA strand where it exits the tetramer. Each RuvB hexamer is contacted by two RuvA subunits (via domain III) on 2 adjacent RuvB subunits; this complex drives branch migration. In the full resolvosome a probable DNA-RuvA(4)-RuvB(12)-RuvC(2) complex forms which resolves the HJ.

Its subcellular location is the cytoplasm. Functionally, the RuvA-RuvB-RuvC complex processes Holliday junction (HJ) DNA during genetic recombination and DNA repair, while the RuvA-RuvB complex plays an important role in the rescue of blocked DNA replication forks via replication fork reversal (RFR). RuvA specifically binds to HJ cruciform DNA, conferring on it an open structure. The RuvB hexamer acts as an ATP-dependent pump, pulling dsDNA into and through the RuvAB complex. HJ branch migration allows RuvC to scan DNA until it finds its consensus sequence, where it cleaves and resolves the cruciform DNA. The protein is Holliday junction branch migration complex subunit RuvA of Streptococcus pneumoniae (strain Taiwan19F-14).